We begin with the raw amino-acid sequence, 238 residues long: ATP-dependent dethiobiotin synthetase BioD (238 aa).

12–17 contributes to the ATP binding site; sequence EVGKTV. T16 contributes to the Mg(2+) binding site. Residue K37 is part of the active site. T41 is a substrate binding site. ATP contacts are provided by residues D50, 109-112, 170-171, and 200-202; these read EGAG, GS, and PAG. Residues D50 and E109 each contribute to the Mg(2+) site.

This sequence belongs to the dethiobiotin synthetase family. In terms of assembly, homodimer. Mg(2+) serves as cofactor.

It localises to the cytoplasm. It catalyses the reaction (7R,8S)-7,8-diammoniononanoate + CO2 + ATP = (4R,5S)-dethiobiotin + ADP + phosphate + 3 H(+). It participates in cofactor biosynthesis; biotin biosynthesis; biotin from 7,8-diaminononanoate: step 1/2. Catalyzes a mechanistically unusual reaction, the ATP-dependent insertion of CO2 between the N7 and N8 nitrogen atoms of 7,8-diaminopelargonic acid (DAPA, also called 7,8-diammoniononanoate) to form a ureido ring. The sequence is that of ATP-dependent dethiobiotin synthetase BioD from Streptomyces avermitilis (strain ATCC 31267 / DSM 46492 / JCM 5070 / NBRC 14893 / NCIMB 12804 / NRRL 8165 / MA-4680).